Reading from the N-terminus, the 529-residue chain is tRNA-2-methylthio-N(6)-dimethylallyladenosine synthase 1 (529 aa).

Residues Met1–Asn21 are disordered. An MTTase N-terminal domain is found at Arg25–His141. Positions 34, 70, 104, 178, 182, and 185 each coordinate [4Fe-4S] cluster. The Radical SAM core domain maps to Arg164–Glu407. Residues Arg410–Leu480 enclose the TRAM domain. Residues Leu481 to Gly504 form a disordered region.

It belongs to the methylthiotransferase family. MiaB subfamily. Monomer. [4Fe-4S] cluster serves as cofactor.

The protein localises to the cytoplasm. The catalysed reaction is N(6)-dimethylallyladenosine(37) in tRNA + (sulfur carrier)-SH + AH2 + 2 S-adenosyl-L-methionine = 2-methylsulfanyl-N(6)-dimethylallyladenosine(37) in tRNA + (sulfur carrier)-H + 5'-deoxyadenosine + L-methionine + A + S-adenosyl-L-homocysteine + 2 H(+). Catalyzes the methylthiolation of N6-(dimethylallyl)adenosine (i(6)A), leading to the formation of 2-methylthio-N6-(dimethylallyl)adenosine (ms(2)i(6)A) at position 37 in tRNAs that read codons beginning with uridine. This Mycobacterium marinum (strain ATCC BAA-535 / M) protein is tRNA-2-methylthio-N(6)-dimethylallyladenosine synthase 1.